Consider the following 542-residue polypeptide: Cytochrome P450 monooxygenase 91 (542 aa).

A signal peptide spans 1–22 (MLDILRFVLICGILWILRRVLL). 2 N-linked (GlcNAc...) asparagine glycosylation sites follow: Asn299 and Asn392. Heme is bound at residue Cys482.

The protein belongs to the cytochrome P450 family. Heme serves as cofactor.

It functions in the pathway secondary metabolite biosynthesis. In terms of biological role, cytochrome P450 monooxygenase that is able to use dehydroabietic acid as a substrate for oxidation. This Postia placenta (strain ATCC 44394 / Madison 698-R) (Brown rot fungus) protein is Cytochrome P450 monooxygenase 91.